A 256-amino-acid chain; its full sequence is 5'-nucleotidase SurE (256 aa).

Residues D8, D9, S39, and N91 each coordinate a divalent metal cation.

This sequence belongs to the SurE nucleotidase family. The cofactor is a divalent metal cation.

It is found in the cytoplasm. The catalysed reaction is a ribonucleoside 5'-phosphate + H2O = a ribonucleoside + phosphate. Nucleotidase that shows phosphatase activity on nucleoside 5'-monophosphates. The polypeptide is 5'-nucleotidase SurE (Marinobacter nauticus (strain ATCC 700491 / DSM 11845 / VT8) (Marinobacter aquaeolei)).